The following is a 295-amino-acid chain: Protein shisa-2 homolog (295 aa).

An N-terminal signal peptide occupies residues 1-33; it reads MWGARRSSVSSSWNAASLLQLLLAALLAAGARA. Residues 34 to 110 lie on the Extracellular side of the membrane; that stretch reads SGEYCHGWLD…RADKDGPDGS (77 aa). Residues 87 to 108 are disordered; that stretch reads GCDNDRQQGAGEPGRADKDGPD. A helical transmembrane segment spans residues 111-131; that stretch reads AVPIYVPFLIVGSVFVAFIIL. Residues 132–295 are Cytoplasmic-facing; that stretch reads GSLVAACCCR…EQKMYPAVTV (164 aa). The segment at 168 to 205 is disordered; the sequence is PSASTSRGSSSRQSSTAASSSSSANSGARAPPTRSQTN. Residues 169-197 are compositionally biased toward low complexity; it reads SASTSRGSSSRQSSTAASSSSSANSGARA.

The protein belongs to the shisa family.

The protein resides in the endoplasmic reticulum membrane. Functionally, plays an essential role in the maturation of presomitic mesoderm cells by individual attenuation of both FGF and WNT signaling. This is Protein shisa-2 homolog (SHISA2) from Homo sapiens (Human).